The sequence spans 322 residues: Alanine dehydrogenase (322 aa).

Residue lysine 65 is the Proton donor/acceptor of the active site. NAD(+) contacts are provided by residues arginine 108, 135 to 136, 157 to 159, 217 to 219, lysine 223, and serine 290; these read TQ, DVR, and GAD.

This sequence belongs to the ornithine cyclodeaminase/mu-crystallin family. Archaeal alanine dehydrogenase subfamily. As to quaternary structure, homodimer.

It catalyses the reaction L-alanine + NAD(+) + H2O = pyruvate + NH4(+) + NADH + H(+). Functionally, catalyzes the NAD(+)-dependent oxidative deamination of L-alanine to pyruvate, and the reverse reaction, the reductive amination of pyruvate. Its physiological role is not known. Cannot use NADP(+) instead of NAD(+) as a cosubstrate. In the deamination direction, can also efficiently use L-2-aminobutyrate as substrate. In the reductive amination direction, also exhibits high activity with 2-oxobutyrate and oxaloacetate as substrate. In contrast to bacterial homologs, does not exhibit any ornithine cyclodeaminase activity. The protein is Alanine dehydrogenase of Archaeoglobus fulgidus (strain ATCC 49558 / DSM 4304 / JCM 9628 / NBRC 100126 / VC-16).